The sequence spans 237 residues: Ribosomal RNA small subunit methyltransferase G (237 aa).

Residues Gly-79, 130 to 131 (CE), and Arg-147 contribute to the S-adenosyl-L-methionine site.

Belongs to the methyltransferase superfamily. RNA methyltransferase RsmG family.

It is found in the cytoplasm. In terms of biological role, specifically methylates the N7 position of a guanine in 16S rRNA. The sequence is that of Ribosomal RNA small subunit methyltransferase G from Malacoplasma penetrans (strain HF-2) (Mycoplasma penetrans).